Reading from the N-terminus, the 266-residue chain is NAD kinase 2 (266 aa).

Aspartate 51 functions as the Proton acceptor in the catalytic mechanism. Residues aspartate 51–glycine 52, asparagine 123–glutamate 124, arginine 150, aspartate 152, threonine 163–serine 168, and alanine 187 each bind NAD(+).

This sequence belongs to the NAD kinase family. A divalent metal cation is required as a cofactor.

It is found in the cytoplasm. It carries out the reaction NAD(+) + ATP = ADP + NADP(+) + H(+). Its function is as follows. Involved in the regulation of the intracellular balance of NAD and NADP, and is a key enzyme in the biosynthesis of NADP. Catalyzes specifically the phosphorylation on 2'-hydroxyl of the adenosine moiety of NAD to yield NADP. The sequence is that of NAD kinase 2 from Oceanobacillus iheyensis (strain DSM 14371 / CIP 107618 / JCM 11309 / KCTC 3954 / HTE831).